Consider the following 155-residue polypeptide: GCPLGFHQNRRSCYWFSTIKSSFAEAAGYCRYLESHLAIISNKDEDSFIRGYATRLGEAFNYWLGASDLNIEGRWLWEGQRRMNYTNWSPGQPDNAGGIEHCLELRRDLGNYLWNDYQCQKPSHFICEKERIPYTNSLHANLQQRDSLHANLQQR.

Intrachain disulfides connect cysteine 2/cysteine 13, cysteine 30/cysteine 127, and cysteine 102/cysteine 119. The 120-residue stretch at 9–128 (NRRSCYWFST…CQKPSHFICE (120 aa)) folds into the C-type lectin domain. N-linked (GlcNAc...) asparagine glycosylation occurs at asparagine 84. A run of 2 repeats spans residues 136–145 (NSLHANLQQR) and 146–155 (DSLHANLQQR).

In terms of processing, glycosylated.

Functionally, may promote nucleation and/or growth of calcium carbonate crystals. Binds to D-galactose and D-mannose/D-glucose. The sequence is that of Perlucin from Haliotis laevigata (Smooth Australian abalone).